Consider the following 397-residue polypeptide: Tryptophan synthase beta chain (397 aa).

The residue at position 86 (K86) is an N6-(pyridoxal phosphate)lysine.

This sequence belongs to the TrpB family. Tetramer of two alpha and two beta chains. Pyridoxal 5'-phosphate serves as cofactor.

It catalyses the reaction (1S,2R)-1-C-(indol-3-yl)glycerol 3-phosphate + L-serine = D-glyceraldehyde 3-phosphate + L-tryptophan + H2O. It functions in the pathway amino-acid biosynthesis; L-tryptophan biosynthesis; L-tryptophan from chorismate: step 5/5. Its function is as follows. The beta subunit is responsible for the synthesis of L-tryptophan from indole and L-serine. This is Tryptophan synthase beta chain from Aeromonas salmonicida (strain A449).